The chain runs to 37 residues: Large ribosomal subunit protein bL36 (37 aa).

It belongs to the bacterial ribosomal protein bL36 family.

In Gloeothece citriformis (strain PCC 7424) (Cyanothece sp. (strain PCC 7424)), this protein is Large ribosomal subunit protein bL36.